The following is a 449-amino-acid chain: Glucose-6-phosphate isomerase (449 aa).

The active-site Proton donor is the glutamate 291. Active-site residues include histidine 312 and lysine 426.

The protein belongs to the GPI family.

The protein localises to the cytoplasm. It carries out the reaction alpha-D-glucose 6-phosphate = beta-D-fructose 6-phosphate. It participates in carbohydrate biosynthesis; gluconeogenesis. The protein operates within carbohydrate degradation; glycolysis; D-glyceraldehyde 3-phosphate and glycerone phosphate from D-glucose: step 2/4. Its function is as follows. Catalyzes the reversible isomerization of glucose-6-phosphate to fructose-6-phosphate. The polypeptide is Glucose-6-phosphate isomerase (Pediococcus pentosaceus (strain ATCC 25745 / CCUG 21536 / LMG 10740 / 183-1w)).